The following is a 780-amino-acid chain: Pentatricopeptide repeat-containing protein At1g79540 (780 aa).

PPR repeat units follow at residues 91–125 (SRES…GVSV), 126–160 (DSYC…DCRP), 161–196 (DVFT…NCSP), 197–231 (NLYT…GISP), 232–266 (NRVT…GNYP), 267–301 (DSVA…GFVL), 302–336 (GLRG…NIKP), 337–371 (DIIL…GISP), 372–406 (DTYC…ESFP), 407–441 (DACT…GCSP), 442–476 (SVAT…RPAS), 481–515 (LSHS…GSSP), 516–550 (DIVS…GLSP), 551–585 (DSVT…RHSP), 653–687 (TLGP…KILV), 688–722 (TPPS…NFKL), and 723–758 (MPRV…GYNV).

Belongs to the PPR family. P subfamily.

The protein is Pentatricopeptide repeat-containing protein At1g79540 of Arabidopsis thaliana (Mouse-ear cress).